A 506-amino-acid chain; its full sequence is Glutamate--tRNA ligase (506 aa).

The 'HIGH' region signature appears at 9–19 (PSPTGFQHIGG). Positions 251-255 (KLSKR) match the 'KMSKS' region motif. Lysine 254 contacts ATP.

It belongs to the class-I aminoacyl-tRNA synthetase family. Glutamate--tRNA ligase type 1 subfamily. Monomer.

It is found in the cytoplasm. It catalyses the reaction tRNA(Glu) + L-glutamate + ATP = L-glutamyl-tRNA(Glu) + AMP + diphosphate. In terms of biological role, catalyzes the attachment of glutamate to tRNA(Glu) in a two-step reaction: glutamate is first activated by ATP to form Glu-AMP and then transferred to the acceptor end of tRNA(Glu). The polypeptide is Glutamate--tRNA ligase (Treponema denticola (strain ATCC 35405 / DSM 14222 / CIP 103919 / JCM 8153 / KCTC 15104)).